The chain runs to 114 residues: Large ribosomal subunit protein bL19 (114 aa).

Belongs to the bacterial ribosomal protein bL19 family.

This protein is located at the 30S-50S ribosomal subunit interface and may play a role in the structure and function of the aminoacyl-tRNA binding site. In Bacillus cytotoxicus (strain DSM 22905 / CIP 110041 / 391-98 / NVH 391-98), this protein is Large ribosomal subunit protein bL19.